A 1685-amino-acid polypeptide reads, in one-letter code: Myomesin-1 (1685 aa).

The disordered stretch occupies residues 33–80; it reads KKRSAVYTQGSTAYSSRSSAAHRRESEAFRRASASSSQQQASQHALSS. 2 stretches are compositionally biased toward low complexity: residues 41–51 and 63–80; these read QGSTAYSSRSS and RASA…ALSS. Residue Ser-113 is modified to Phosphoserine. The segment at 177-244 is disordered; the sequence is GITTSKQSTA…TSEKKSRKVV (68 aa). Positions 179–220 are enriched in low complexity; it reads TTSKQSTASKQTTASKQSTASKQSTASKQSTASRQSTASRQS. Tandem repeats lie at residues 182-187, 188-193, 194-199, 200-205, 206-211, and 212-217. The segment at 182 to 217 is 6 X 6 AA tandem repeats; that stretch reads KQSTASKQTTASKQSTASKQSTASKQSTASRQSTAS. Residues 221-233 are compositionally biased toward polar residues; sequence VVSKQATSALQQE. Ig-like C2-type domains follow at residues 277–368 and 396–498; these read PEFI…ASVV and PYGY…AYVF. Fibronectin type-III domains lie at 512 to 607, 640 to 734, and 741 to 834; these read APLD…ALDP, PPTD…VVGD, and APGK…VKAA. The interval 840-938 is disordered; sequence SPDVCPALSD…TDRAPPSPPC (99 aa). A compositionally biased stretch (low complexity) spans 874–888; that stretch reads LLGSKPNKPSLPSSS. Phosphoserine is present on residues Ser-883 and Ser-887. The span at 889–902 shows a compositional bias: polar residues; the sequence is QNLGQTEVSKVSET. Residues 920–931 are compositionally biased toward basic and acidic residues; sequence SKSDPLKKKTDR. 2 Fibronectin type-III domains span residues 933-1034 and 1041-1140; these read PPSP…CEEW and PPHS…TRPG. Ser-1054 carries the phosphoserine modification. Ig-like C2-type domains follow at residues 1132 to 1230, 1358 to 1444, and 1573 to 1662; these read PVVA…EELK, PHFV…LKLV, and RVLG…FTVS. The cysteines at positions 1160 and 1210 are disulfide-linked.

In terms of assembly, homodimer. Interacts with TTN/titin. Interacts with PNKD.

The protein resides in the cytoplasm. Its subcellular location is the myofibril. It localises to the sarcomere. The protein localises to the m line. In terms of biological role, major component of the vertebrate myofibrillar M band. Binds myosin, titin, and light meromyosin. This binding is dose dependent. The protein is Myomesin-1 (MYOM1) of Homo sapiens (Human).